The primary structure comprises 608 residues: MCGIVGILGRGPVVDKLVASLRRLEYRGYDSAGLATLEGVRIERRRAEGKLRNLEEQLRYCPPSGHAGIGHTRWATHGKPTESNAHPHATENVAVVHNGIIENFRELRAELERNGAGFNSETDTEVVAHLVDSYLKNGYSPQDAVQASLPRLRGAFALAFLFKANDDLLIGACKGSPLAIGHGRGEVYLGSDAIALAPLTDTVTYLEDGDWAVLTRATCVIYGADGSIVQRETSKSGVSALLVDKANYRHFMAKEIHEQPTVAGKTLAHYLDVAAKRVALPLALPFDFNCIQRISITACGTASYAGHIAKYWFERLARLPCDVDVASEFRYREAPLRRGDLAIVISQSGETADTLAALRYAKGKGLHTISVVNVPTSTIARESESVLPTLAGPEIGVASTKAFICQLMVLGVLAVRAAKERGKLSEIDESQLVRELIEVPRLIAAALLVEPQIEKLARYIAGARTVLYLGRGTSAPLALEGALKLKEISYIHSEGYAAGELKHGPIALIDEAVPVVVIAPYDEVFEKTVSNMQEVAARGGKIILITDAKGASEAMVDTLLTIVLPAMVASFTPLVYAIPVQLLAYHTAVARGADVDQPRNLAKSVTVE.

Residue Cys2 is the Nucleophile; for GATase activity of the active site. Residues Cys2–Ala217 form the Glutamine amidotransferase type-2 domain. SIS domains follow at residues Leu284–Lys423 and Leu456–Pro598. Catalysis depends on Lys603, which acts as the For Fru-6P isomerization activity.

The protein localises to the cytoplasm. It catalyses the reaction D-fructose 6-phosphate + L-glutamine = D-glucosamine 6-phosphate + L-glutamate. Functionally, involved in the production of the root hair deformation (HAD) factor specifically on soybean. This is Glutamine--fructose-6-phosphate aminotransferase [isomerizing] (nodM) from Bradyrhizobium diazoefficiens (strain JCM 10833 / BCRC 13528 / IAM 13628 / NBRC 14792 / USDA 110).